The chain runs to 334 residues: Dolichyl-phosphate beta-glucosyltransferase (334 aa).

The Lumenal portion of the chain corresponds to 1 to 12 (MRALRFLIENRN). A helical transmembrane segment spans residues 13–33 (TVFFTLLVALVLSLYLLVYLF). The Cytoplasmic portion of the chain corresponds to 34 to 334 (SHTPRPPYPE…LGIYRDNKKC (301 aa)).

The protein belongs to the glycosyltransferase 2 family.

Its subcellular location is the endoplasmic reticulum membrane. It carries out the reaction a di-trans,poly-cis-dolichyl phosphate + UDP-alpha-D-glucose = a di-trans,poly-cis-dolichyl beta-D-glucosyl phosphate + UDP. It participates in protein modification; protein glycosylation. Functionally, endoplasmic reticulum membrane-bound UDP-glucose:dolichyl-phosphate glucosyltransferase involved in protein N-linked glycosylation. The chain is Dolichyl-phosphate beta-glucosyltransferase from Saccharomyces cerevisiae (strain ATCC 204508 / S288c) (Baker's yeast).